Reading from the N-terminus, the 233-residue chain is Uridylate kinase (233 aa).

9–10 (GS) lines the ATP pocket. UMP is bound at residue G43. 2 residues coordinate ATP: G44 and R48. Residues D65 and 113-119 (VTPGQTT) each bind UMP. T139, Y145, and D148 together coordinate ATP.

This sequence belongs to the UMP kinase family. In terms of assembly, homohexamer.

The protein localises to the cytoplasm. The enzyme catalyses UMP + ATP = UDP + ADP. Its pathway is pyrimidine metabolism; CTP biosynthesis via de novo pathway; UDP from UMP (UMPK route): step 1/1. With respect to regulation, inhibited by UTP. Catalyzes the reversible phosphorylation of UMP to UDP. The protein is Uridylate kinase of Methanosarcina acetivorans (strain ATCC 35395 / DSM 2834 / JCM 12185 / C2A).